Consider the following 417-residue polypeptide: Voltage-gated potassium channel Kch (417 aa).

The Cytoplasmic portion of the chain corresponds to 1-21; that stretch reads MSHWATFKQTATNLWVTLRHD. A helical membrane pass occupies residues 22-41; that stretch reads ILALAVFLNGLLIFKTIYGM. The Periplasmic portion of the chain corresponds to 42–63; it reads SVNLLDIFHIKAFSELDLSLLA. Residues 64–83 form a helical membrane-spanning segment; sequence NAPLFMLGVFLVLNSIGLLF. At 84 to 86 the chain is on the cytoplasmic side; that stretch reads RAK. A helical membrane pass occupies residues 87-104; that stretch reads LAWAISIILLLIALIYTL. The Periplasmic segment spans residues 105-110; sequence HFYPWL. Residues 111–127 form a helical membrane-spanning segment; the sequence is KFSIGFCIFTLVFLLIL. The Cytoplasmic segment spans residues 128–140; that stretch reads RKDFSHSSAAAGT. The chain crosses the membrane as a helical span at residues 141–160; the sequence is IFAFISFTTLLFYSTYGALY. Over 161-199 the chain is Periplasmic; sequence LSEGFNPRIESLMTAFYFSIETMSTVGYGDIVPVSESAR. The Selectivity filter motif lies at 185 to 190; the sequence is TVGYGD. Residues 200-220 form a helical membrane-spanning segment; the sequence is LFTISVIISGITVFATSMTSI. The Cytoplasmic portion of the chain corresponds to 221-417; the sequence is FGPLIRGGFN…KADSKESAQK (197 aa). In terms of domain architecture, RCK N-terminal spans 243-363; it reads KDHFIVCGHS…IKMVHPDIIL (121 aa).

Belongs to the potassium channel family. As to quaternary structure, dimer.

The protein resides in the cell inner membrane. Its function is as follows. K(+)-specific ion channel. May play a role in the defense against osmotic shock. The chain is Voltage-gated potassium channel Kch (kch) from Escherichia coli (strain K12).